A 209-amino-acid polypeptide reads, in one-letter code: Pyridoxine/pyridoxamine 5'-phosphate oxidase (209 aa).

Residues 5–8 (REEY) and Lys-63 each bind substrate. Residues 58 to 63 (RVVLLK), 73 to 74 (FT), Arg-79, Lys-80, and Gln-102 each bind FMN. Substrate is bound by residues Tyr-120, Arg-124, and Ser-128. Residues 137–138 (QS) and Trp-181 contribute to the FMN site. 187-189 (RLH) contacts substrate. Residue Arg-191 participates in FMN binding.

It belongs to the pyridoxamine 5'-phosphate oxidase family. In terms of assembly, homodimer. FMN serves as cofactor.

It catalyses the reaction pyridoxamine 5'-phosphate + O2 + H2O = pyridoxal 5'-phosphate + H2O2 + NH4(+). The enzyme catalyses pyridoxine 5'-phosphate + O2 = pyridoxal 5'-phosphate + H2O2. The protein operates within cofactor metabolism; pyridoxal 5'-phosphate salvage; pyridoxal 5'-phosphate from pyridoxamine 5'-phosphate: step 1/1. Its pathway is cofactor metabolism; pyridoxal 5'-phosphate salvage; pyridoxal 5'-phosphate from pyridoxine 5'-phosphate: step 1/1. Catalyzes the oxidation of either pyridoxine 5'-phosphate (PNP) or pyridoxamine 5'-phosphate (PMP) into pyridoxal 5'-phosphate (PLP). This Alcanivorax borkumensis (strain ATCC 700651 / DSM 11573 / NCIMB 13689 / SK2) protein is Pyridoxine/pyridoxamine 5'-phosphate oxidase.